A 75-amino-acid chain; its full sequence is Exodeoxyribonuclease 7 small subunit (75 aa).

It belongs to the XseB family. Heterooligomer composed of large and small subunits.

It is found in the cytoplasm. The catalysed reaction is Exonucleolytic cleavage in either 5'- to 3'- or 3'- to 5'-direction to yield nucleoside 5'-phosphates.. Functionally, bidirectionally degrades single-stranded DNA into large acid-insoluble oligonucleotides, which are then degraded further into small acid-soluble oligonucleotides. This Anaplasma phagocytophilum (strain HZ) protein is Exodeoxyribonuclease 7 small subunit.